We begin with the raw amino-acid sequence, 232 residues long: RNA chaperone ProQ (232 aa).

Residues 105–182 (EAKARVQAQR…REEQHTPVSD (78 aa)) are disordered. Basic and acidic residues predominate over residues 117–136 (QQAKKREAAAAAGEKEDAPR). Residues 137–146 (RERKPRPTTP) are compositionally biased toward basic residues. Positions 147-177 (RRKEGAERKPRAQKSVEKAPKTVKAPREEQH) are enriched in basic and acidic residues.

Belongs to the ProQ family.

It localises to the cytoplasm. RNA chaperone with significant RNA binding, RNA strand exchange and RNA duplexing activities. May regulate ProP activity through an RNA-based, post-transcriptional mechanism. In Escherichia coli O7:K1 (strain IAI39 / ExPEC), this protein is RNA chaperone ProQ.